A 626-amino-acid polypeptide reads, in one-letter code: (+)-3-carene synthase 2, chloroplastic (626 aa).

The transit peptide at 1–45 directs the protein to the chloroplast; sequence MSLISAVPLASSCVSKSLISSVREHTALRRAIATLQMSRRGKSVA. Residues Asp-377, Asp-381, and Asp-529 each contribute to the Mg(2+) site. The short motif at 377–381 is the DDXXD motif element; it reads DDMYD.

This sequence belongs to the terpene synthase family. Tpsd subfamily. Mg(2+) serves as cofactor. It depends on Mn(2+) as a cofactor.

The protein localises to the plastid. It is found in the chloroplast. The catalysed reaction is (2E)-geranyl diphosphate = (+)-car-3-ene + diphosphate. It participates in terpene metabolism; oleoresin biosynthesis. The protein operates within secondary metabolite biosynthesis; terpenoid biosynthesis. Functionally, monoterpene synthase (TPS) involved in the biosynthesis of monoterpene natural products included in conifer oleoresin secretions and volatile emissions; these compounds contribute to biotic and abiotic stress defense against herbivores and pathogens. Catalyzes the conversion of (2E)-geranyl diphosphate (GPP) to (+)-3-carene. The chain is (+)-3-carene synthase 2, chloroplastic from Pinus banksiana (Jack pine).